The sequence spans 196 residues: Large ribosomal subunit protein uL6 (196 aa).

Belongs to the universal ribosomal protein uL6 family. Part of the 50S ribosomal subunit.

In terms of biological role, this protein binds to the 23S rRNA, and is important in its secondary structure. It is located near the subunit interface in the base of the L7/L12 stalk, and near the tRNA binding site of the peptidyltransferase center. The protein is Large ribosomal subunit protein uL6 of Pyrobaculum aerophilum (strain ATCC 51768 / DSM 7523 / JCM 9630 / CIP 104966 / NBRC 100827 / IM2).